We begin with the raw amino-acid sequence, 380 residues long: MKYFFSLPFPKVHTTCKHTAAATASQPLQKIRERLESGPGFQEFVQNPSYNREDWSAYEGKLKREKGEQDRLRLPPWLKTKIPMGKNFSRIKDQLRELKLATVCEEAKCPNIGECWGGGEHGTQTATIMLMGDTCTRGCRFCSVKTARAPPPLDPDEPKKTASAIASWGLDYIVLTSVDRDDLPDGGSNHIAETIREIKRQNPRIFVECLAPDFRGNLDCIRTVATSGLDVYAHNIETVESLTPFVRDRRAEYRQSLKCLASVKEINPNMVTKTSIMLGLGETDEQVEQTMKDLRAVGVDCLTLGQYMQPTKRHLKVIEYVTPEKFKHWETRGNELGFLYTASGPLVRSSYKAGEFFITSILKNRAAAAAEEATATKPSE.

7 residues coordinate [4Fe-4S] cluster: cysteine 104, cysteine 109, cysteine 115, cysteine 135, cysteine 139, cysteine 142, and serine 350. Residues 120-339 enclose the Radical SAM core domain; the sequence is EHGTQTATIM…ETRGNELGFL (220 aa).

This sequence belongs to the radical SAM superfamily. Lipoyl synthase family. It depends on [4Fe-4S] cluster as a cofactor.

It is found in the mitochondrion. The catalysed reaction is [[Fe-S] cluster scaffold protein carrying a second [4Fe-4S](2+) cluster] + N(6)-octanoyl-L-lysyl-[protein] + 2 oxidized [2Fe-2S]-[ferredoxin] + 2 S-adenosyl-L-methionine + 4 H(+) = [[Fe-S] cluster scaffold protein] + N(6)-[(R)-dihydrolipoyl]-L-lysyl-[protein] + 4 Fe(3+) + 2 hydrogen sulfide + 2 5'-deoxyadenosine + 2 L-methionine + 2 reduced [2Fe-2S]-[ferredoxin]. The protein operates within protein modification; protein lipoylation via endogenous pathway; protein N(6)-(lipoyl)lysine from octanoyl-[acyl-carrier-protein]: step 2/2. Catalyzes the radical-mediated insertion of two sulfur atoms into the C-6 and C-8 positions of the octanoyl moiety bound to the lipoyl domains of lipoate-dependent enzymes, thereby converting the octanoylated domains into lipoylated derivatives. This chain is Lipoyl synthase, mitochondrial, found in Culex quinquefasciatus (Southern house mosquito).